A 142-amino-acid chain; its full sequence is MPTPSMEDYIEKIYSLIETKGYARVSDIADELFVHPSSVTKMVQKLDKDEYLIYEKYRGLILTPKGTQMGKRLLERHALLESFLSIIGVDPSHIYHDVEGIEHHLSWNSIDRIGDVVQFFENHPDALKTLKAMETNKPETKE.

In terms of domain architecture, HTH dtxR-type spans 1–63 (MPTPSMEDYI…YEKYRGLILT (63 aa)). Mn(2+) is bound by residues aspartate 8, glutamate 11, histidine 77, glutamate 99, glutamate 102, and histidine 103.

The protein belongs to the DtxR/MntR family. Homodimer.

Its subcellular location is the cytoplasm. DNA binding is strongly activated by Mn(2+). In terms of biological role, central regulator of manganese homeostasis. The sequence is that of HTH-type transcriptional regulator MntR from Listeria monocytogenes serotype 4b (strain CLIP80459).